Here is a 328-residue protein sequence, read N- to C-terminus: 5,10-methylenetetrahydromethanopterin reductase (328 aa).

This sequence belongs to the mer family.

It localises to the cytoplasm. The catalysed reaction is 5-methyl-5,6,7,8-tetrahydromethanopterin + oxidized coenzyme F420-(gamma-L-Glu)(n) + H(+) = 5,10-methylenetetrahydromethanopterin + reduced coenzyme F420-(gamma-L-Glu)(n). Its pathway is one-carbon metabolism; methanogenesis from CO(2); methyl-coenzyme M from 5,10-methylene-5,6,7,8-tetrahydromethanopterin: step 1/2. Catalyzes the reversible reduction of methylene-H(4)MPT to methyl-H(4)MPT. This chain is 5,10-methylenetetrahydromethanopterin reductase, found in Methanosarcina acetivorans (strain ATCC 35395 / DSM 2834 / JCM 12185 / C2A).